Reading from the N-terminus, the 875-residue chain is Valine--tRNA ligase (875 aa).

The 'HIGH' region motif lies at 45 to 55 (PNVTGVLHMGH). A 'KMSKS' region motif is present at residues 524 to 528 (KMSKS). Residue K527 participates in ATP binding. The stretch at 803 to 837 (VKSLIDKTKELIRLEKQLEKYKMLNISVSKKLENE) forms a coiled coil.

It belongs to the class-I aminoacyl-tRNA synthetase family. ValS type 1 subfamily. In terms of assembly, monomer.

It localises to the cytoplasm. It carries out the reaction tRNA(Val) + L-valine + ATP = L-valyl-tRNA(Val) + AMP + diphosphate. Catalyzes the attachment of valine to tRNA(Val). As ValRS can inadvertently accommodate and process structurally similar amino acids such as threonine, to avoid such errors, it has a 'posttransfer' editing activity that hydrolyzes mischarged Thr-tRNA(Val) in a tRNA-dependent manner. The protein is Valine--tRNA ligase of Borreliella burgdorferi (strain ATCC 35210 / DSM 4680 / CIP 102532 / B31) (Borrelia burgdorferi).